The chain runs to 689 residues: MAIDRRREAAGSGAGRQPAPAEENGSLPPGDAAASAPLGGRAGSGSSAEIQPLPALHPSGGPHSSCCAATAAPSLLLLDYDGSVLPFLGGLGGGYQKTLVVLTWIPALFIGFSQFSDSFLLDQPDFWCRGAGKGTELAGATVTGRWGDMGNWTSPSATPFSTASWGTTSNRSNSSDTPPLPSPPGKGNNDSNCDCHAWDYGIRTGLIQNVVSKWDLVCDNTWKVHIAKFSLLVGLIFGYLITGCIADWVGRRPVLLFSTIFILIFGLTVALSVNVTMFSTLRFFEGFCLAGIILTLYALRIELCPPGKRFIITMVASFVAMAGQFLMPGLAALCRDWQVLQALIICPFLLMLLYWSIFPESLRWLMATQQFESAKKLILYLTQKNCVSPESDIKGVMPELEKELSRRPKKVCIVKVVGTRNLWKNIVVLCVNSLTGYGIHHCFARSMMGHEVKVPLLENFYADYYTMASIALASCLAMCLVVKFLGRRGGLLLFMILTALASLLQLGLLNLIGKYSQHPDSELQLKLAVGMSDSVKDKFSIAFSIVGMFASHAVGSLSVFFCAEITPTVIRCGGLGLVLASAGFGMLTAPIIELHNQKGYFLHHIIFACCTLICIICILLLPESRNQNLPENIANGEHYTRQPLLPHKKGEQPLLLTNAELKDYSGLHDVAAVGDGLPEGATANGMKTM.

Disordered stretches follow at residues Met-1 to Ala-55 and Thr-162 to Asn-188. N-linked (GlcNAc...) asparagine glycosylation is present at Asn-24. A compositionally biased stretch (polar residues) spans Trp-165 to Thr-177. The next 2 helical transmembrane spans lie at Phe-229–Val-249 and Pro-253–Val-273. A glycan (N-linked (GlcNAc...) asparagine) is linked at Asn-274. The next 8 membrane-spanning stretches (helical) occupy residues Phe-283–Leu-303, Phe-310–Leu-330, Val-339–Pro-359, Thr-466–Gly-486, Gly-489–Leu-509, Ile-541–Phe-561, Cys-572–Ile-592, and Phe-601–Leu-621.

This sequence belongs to the major facilitator (TC 2.A.1) superfamily. Organic cation transporter (TC 2.A.1.19) family.

The protein resides in the membrane. The chain is Solute carrier family 22 member 23 (Slc22a23) from Mus musculus (Mouse).